A 514-amino-acid polypeptide reads, in one-letter code: Putative ribose/galactose/methyl galactoside import ATP-binding protein 3 (514 aa).

ABC transporter domains are found at residues 21–256 (LRLD…VGRT) and 267–512 (VPTD…SGRS). Residue 53–60 (GENGAGKS) participates in ATP binding.

This sequence belongs to the ABC transporter superfamily. Carbohydrate importer 2 (CUT2) (TC 3.A.1.2) family.

Its subcellular location is the cell inner membrane. The catalysed reaction is D-ribose(out) + ATP + H2O = D-ribose(in) + ADP + phosphate + H(+). The enzyme catalyses D-galactose(out) + ATP + H2O = D-galactose(in) + ADP + phosphate + H(+). In terms of biological role, part of an ABC transporter complex involved in carbohydrate import. Could be involved in ribose, galactose and/or methyl galactoside import. Responsible for energy coupling to the transport system. This is Putative ribose/galactose/methyl galactoside import ATP-binding protein 3 from Burkholderia cenocepacia (strain HI2424).